The following is a 104-amino-acid chain: Large ribosomal subunit protein uL24 (104 aa).

This sequence belongs to the universal ribosomal protein uL24 family. Part of the 50S ribosomal subunit.

Functionally, one of two assembly initiator proteins, it binds directly to the 5'-end of the 23S rRNA, where it nucleates assembly of the 50S subunit. One of the proteins that surrounds the polypeptide exit tunnel on the outside of the subunit. This Shigella dysenteriae serotype 1 (strain Sd197) protein is Large ribosomal subunit protein uL24.